The following is a 453-amino-acid chain: tRNA modification GTPase MnmE (453 aa).

Positions 22, 79, and 119 each coordinate (6S)-5-formyl-5,6,7,8-tetrahydrofolate. In terms of domain architecture, TrmE-type G spans 215–376; it reads GMKVVIAGRP…LKQHLKSLMG (162 aa). N225 contacts K(+). Residues 225 to 230, 244 to 250, 269 to 272, and 334 to 337 each bind GTP; these read NAGKSS, TEIAGTT, DTAG, and NKAD. A Mg(2+)-binding site is contributed by S229. K(+) is bound by residues T244, I246, and T249. Residue T250 coordinates Mg(2+). K453 serves as a coordination point for (6S)-5-formyl-5,6,7,8-tetrahydrofolate.

The protein belongs to the TRAFAC class TrmE-Era-EngA-EngB-Septin-like GTPase superfamily. TrmE GTPase family. Homodimer. Heterotetramer of two MnmE and two MnmG subunits. It depends on K(+) as a cofactor.

Its subcellular location is the cytoplasm. In terms of biological role, exhibits a very high intrinsic GTPase hydrolysis rate. Involved in the addition of a carboxymethylaminomethyl (cmnm) group at the wobble position (U34) of certain tRNAs, forming tRNA-cmnm(5)s(2)U34. The chain is tRNA modification GTPase MnmE from Shewanella baltica (strain OS195).